The following is a 163-amino-acid chain: Lipoprotein signal peptidase (163 aa).

Transmembrane regions (helical) follow at residues 11–31, 63–83, and 88–108; these read ILIAVFVVIFDQVTKYIIATT, KMTFFFIITIIILIALVYFFI, and YNLFMQVAISLLFAGALGNFI. Active-site residues include Asp118 and Asp136. A helical transmembrane segment spans residues 131 to 151; sequence IFNIADSSLTIGVILIIIALL.

It belongs to the peptidase A8 family.

It is found in the cell membrane. It carries out the reaction Release of signal peptides from bacterial membrane prolipoproteins. Hydrolyzes -Xaa-Yaa-Zaa-|-(S,diacylglyceryl)Cys-, in which Xaa is hydrophobic (preferably Leu), and Yaa (Ala or Ser) and Zaa (Gly or Ala) have small, neutral side chains.. It functions in the pathway protein modification; lipoprotein biosynthesis (signal peptide cleavage). Functionally, this protein specifically catalyzes the removal of signal peptides from prolipoproteins. The chain is Lipoprotein signal peptidase from Staphylococcus aureus.